We begin with the raw amino-acid sequence, 413 residues long: Glucose-1-phosphatase (413 aa).

The first 22 residues, 1–22, serve as a signal peptide directing secretion; the sequence is MKKSLLAVAVAGAVLLSSAVQA. Arginine 39 provides a ligand contact to substrate. Catalysis depends on histidine 40, which acts as the Nucleophile. Substrate-binding residues include arginine 43, arginine 116, and glutamate 218. Aspartate 312 functions as the Proton donor in the catalytic mechanism.

This sequence belongs to the histidine acid phosphatase family. As to quaternary structure, homodimer.

Its subcellular location is the periplasm. The enzyme catalyses alpha-D-glucose 1-phosphate + H2O = D-glucose + phosphate. The polypeptide is Glucose-1-phosphatase (agp) (Salmonella typhimurium (strain LT2 / SGSC1412 / ATCC 700720)).